Consider the following 224-residue polypeptide: MLPSSIQPCSWILLLLLVNSSLLWKNVASFPMCAMRNGRCFMSFEDTFELAGSLSHNISIEVSELFNEFEKHYSNVSGLRDKSPMRCNTSFLPTPENKEQARLTHYAALLKSGAMILDAWESPLDDLVSELSTIKNVPDIIISKATDIKKKINAVRNGVNALMSTMLQNGDEEKKNPAWFLQSDNEDARIHSLYGMISCLDNDFKKVDIYLNVLKCYMLKIDNC.

The N-terminal stretch at 1–29 (MLPSSIQPCSWILLLLLVNSSLLWKNVAS) is a signal peptide. N-linked (GlcNAc...) asparagine glycosylation occurs at N19. Residues C33 and C40 are joined by a disulfide bond. N-linked (GlcNAc...) asparagine glycosylation is found at N57, N75, and N88. Intrachain disulfides connect C87–C199 and C216–C224.

Belongs to the somatotropin/prolactin family. Post-translationally, N-glycosylated and sialylated. In terms of tissue distribution, expressed in placenta and hair follicles, with highest expression levels detected in the outer root sheath and no expression detected in bulb. Expressed in placenta, skin wounds, keratinocytes and weakly in embryonic fibroblasts. Expressed in brain, cerebellum and in Neuro-2a cell line. Not detected in liver, kidney, ovary, pituitary gland and brain.

The protein localises to the secreted. The protein resides in the endoplasmic reticulum. Functionally, may have a role in embryonic development. It is likely to provide a growth stimulus to target cells in maternal and fetal tissues during the development of the embryo at mid-gestation. May play a role during wound healing and in the hair follicle cycle as a growth factor and/or an angiogenesis factor. May play a role in microvilli formation and cell proliferation of neuroblastoma cells. The chain is Prolactin-2C3 (Prl2c3) from Mus musculus (Mouse).